Consider the following 591-residue polypeptide: Aspartate--tRNA(Asp/Asn) ligase (591 aa).

Glu-176 is an L-aspartate binding site. The tract at residues 200 to 203 (QLFK) is aspartate. Arg-222 contacts L-aspartate. Residues 222–224 (RDE) and Gln-231 each bind ATP. L-aspartate is bound at residue His-450. Glu-484 contributes to the ATP binding site. Arg-491 provides a ligand contact to L-aspartate. ATP is bound at residue 536 to 539 (GLDR).

The protein belongs to the class-II aminoacyl-tRNA synthetase family. Type 1 subfamily. Homodimer.

Its subcellular location is the cytoplasm. The enzyme catalyses tRNA(Asx) + L-aspartate + ATP = L-aspartyl-tRNA(Asx) + AMP + diphosphate. Aspartyl-tRNA synthetase with relaxed tRNA specificity since it is able to aspartylate not only its cognate tRNA(Asp) but also tRNA(Asn). Reaction proceeds in two steps: L-aspartate is first activated by ATP to form Asp-AMP and then transferred to the acceptor end of tRNA(Asp/Asn). The protein is Aspartate--tRNA(Asp/Asn) ligase of Bacillus anthracis (strain CDC 684 / NRRL 3495).